A 37-amino-acid polypeptide reads, in one-letter code: Large ribosomal subunit protein bL36A (37 aa).

This sequence belongs to the bacterial ribosomal protein bL36 family.

This Haemophilus ducreyi (strain 35000HP / ATCC 700724) protein is Large ribosomal subunit protein bL36A.